A 339-amino-acid polypeptide reads, in one-letter code: U11/U12 small nuclear ribonucleoprotein 48 kDa protein (339 aa).

Residues 55–82 form a CHHC U11-48K-type zinc finger; sequence VVICPYDSNHHMPKSSLAKHMASCRLRK. Zn(2+) contacts are provided by Cys58, His64, His74, and Cys78. Glycyl lysine isopeptide (Lys-Gly) (interchain with G-Cter in SUMO2) cross-links involve residues Lys87 and Lys104. A disordered region spans residues 255–339; that stretch reads HWQEEQEKAE…HSHKRRKQKI (85 aa). A compositionally biased stretch (basic residues) spans 294–309; it reads RHRRDRSRSPHKRKRN. A compositionally biased stretch (basic and acidic residues) spans 310–328; that stretch reads KDKDKNCESRRRKERDGER. Positions 329–339 are enriched in basic residues; the sequence is HHSHKRRKQKI.

In terms of assembly, component of the U11/U12 snRNPs that are part of the U12-type spliceosome. Not found in the major spliceosome.

It localises to the nucleus. Its function is as follows. Likely involved in U12-type 5' splice site recognition. The sequence is that of U11/U12 small nuclear ribonucleoprotein 48 kDa protein (SNRNP48) from Homo sapiens (Human).